A 473-amino-acid chain; its full sequence is Inactive levansucrase (473 aa).

The first 29 residues, Met1 to Ala29, serve as a signal peptide directing secretion.

Belongs to the glycosyl hydrolase 68 family.

Its subcellular location is the secreted. The chain is Inactive levansucrase (sacB) from Geobacillus stearothermophilus (Bacillus stearothermophilus).